Consider the following 451-residue polypeptide: Adenylyltransferase and sulfurtransferase MOCS3 (451 aa).

Residue Thr-60 is modified to Phosphothreonine. ATP-binding positions include Gly-99, Asp-120, Ser-127–Arg-131, Lys-144, and Asp-188–Asn-189. The Zn(2+) site is built by Cys-229 and Cys-232. The Glycyl thioester intermediate; for adenylyltransferase activity role is filled by Cys-246. 2 residues coordinate Zn(2+): Cys-304 and Cys-307. The Rhodanese domain occupies Gln-353–Pro-449. Residue Cys-408 is the Cysteine persulfide intermediate; for sulfurtransferase activity of the active site.

It in the N-terminal section; belongs to the HesA/MoeB/ThiF family. UBA4 subfamily. Requires Zn(2+) as cofactor.

The protein resides in the cytoplasm. The protein localises to the cytosol. It carries out the reaction [molybdopterin-synthase sulfur-carrier protein]-C-terminal Gly-Gly + ATP + H(+) = [molybdopterin-synthase sulfur-carrier protein]-C-terminal Gly-Gly-AMP + diphosphate. The enzyme catalyses [molybdopterin-synthase sulfur-carrier protein]-C-terminal Gly-Gly-AMP + S-sulfanyl-L-cysteinyl-[cysteine desulfurase] + AH2 = [molybdopterin-synthase sulfur-carrier protein]-C-terminal-Gly-aminoethanethioate + L-cysteinyl-[cysteine desulfurase] + A + AMP + 2 H(+). It functions in the pathway tRNA modification; 5-methoxycarbonylmethyl-2-thiouridine-tRNA biosynthesis. The protein operates within cofactor biosynthesis; molybdopterin biosynthesis. In terms of biological role, plays a central role in 2-thiolation of mcm(5)S(2)U at tRNA wobble positions of cytosolic tRNA(Lys), tRNA(Glu) and tRNA(Gln). Also essential during biosynthesis of the molybdenum cofactor. Acts by mediating the C-terminal thiocarboxylation of sulfur carriers URM1 and MOCS2A. Its N-terminus first activates URM1 and MOCS2A as acyl-adenylates (-COAMP), then the persulfide sulfur on the catalytic cysteine is transferred to URM1 and MOCS2A to form thiocarboxylation (-COSH) of their C-terminus. The reaction probably involves hydrogen sulfide that is generated from the persulfide intermediate and that acts as a nucleophile towards URM1 and MOCS2A. Subsequently, a transient disulfide bond is formed. Does not use thiosulfate as sulfur donor; NFS1 probably acting as a sulfur donor for thiocarboxylation reactions. This is Adenylyltransferase and sulfurtransferase MOCS3 from Drosophila ananassae (Fruit fly).